The following is a 448-amino-acid chain: Chromogranin-A (448 aa).

Residues 1–18 (MRSAVVLALLLCAGQVIA) form the signal peptide. C35 and C56 form a disulfide bridge. The interval 116–251 (LKEVTEEALS…AFNPHPSLSY (136 aa)) is disordered. 2 stretches are compositionally biased toward basic and acidic residues: residues 129 to 139 (AEARGDSKEVE) and 158 to 175 (QESR…KEAI). S197 is subject to Phosphoserine. The segment covering 205–222 (VDREKGLGAERGQQAKRE) has biased composition (basic and acidic residues). Residues 223-238 (EEEDEAGEKADAEEEG) are compositionally biased toward acidic residues. Phosphoserine occurs at positions 258 and 288. Residues 263 to 429 (LVVDGARKTG…PEDQELESLS (167 aa)) are disordered. At G308 the chain carries Glycine amide. Over residues 310 to 350 (KSRELEQEKEQERLSKEWEDAKRWSKMDQLAKELTAEKRLE) the composition is skewed to basic and acidic residues. Phosphoserine occurs at positions 311, 324, and 362. The residue at position 363 (M363) is a Methionine sulfoxide. Phosphoserine is present on residues S389, S393, S415, and S429. A compositionally biased stretch (basic and acidic residues) spans 405–422 (YPEEKKEEEGSANRRPED). The O-linked (Xyl...) (chondroitin sulfate) serine glycan is linked to S415.

This sequence belongs to the chromogranin/secretogranin protein family. In terms of assembly, self-interacts; self-assembly is promoted in vitro by chondroitin sulfate attachment which occurs at mildly acidic pH conditions. Interacts with SCG3. Interacts with ITPR1 in the secretory granules. O-glycosylated; contains chondroitin sulfate (CS). CS attachment is pH-dependent, being observed at mildly acidic conditions of pH 5 but not at neutral pH, and promotes self-assembly in vitro. As to expression, highly expressed in adrenal medulla and pituitary gland. Weaker expression detected in cerebrum, cerebellum, spinal cord, liver, thyroid gland, striated muscle, lung, spleen, kidney, parotid gland, and sublingual gland.

The protein localises to the secreted. Its subcellular location is the cytoplasmic vesicle. The protein resides in the secretory vesicle. It localises to the neuronal dense core vesicle. In terms of biological role, strongly inhibits glucose induced insulin release from the pancreas. Inhibits catecholamine release from chromaffin cells and noradrenergic neurons by acting as a non-competitive nicotinic cholinergic antagonist. Can induce mast cell migration, degranulation and production of cytokines and chemokines. Its function is as follows. Regulates granule biogenesis in endocrine cells by up-regulating the transcription of protease nexin 1 (SERPINE2) via a cAMP-PKA-SP1 pathway. This leads to inhibition of granule protein degradation in the Golgi complex which in turn promotes granule formation. The chain is Chromogranin-A (CHGA) from Equus caballus (Horse).